A 473-amino-acid polypeptide reads, in one-letter code: ATP synthase subunit beta (473 aa).

158–165 (GGAGVGKT) is a binding site for ATP.

Belongs to the ATPase alpha/beta chains family. F-type ATPases have 2 components, CF(1) - the catalytic core - and CF(0) - the membrane proton channel. CF(1) has five subunits: alpha(3), beta(3), gamma(1), delta(1), epsilon(1). CF(0) has three main subunits: a(1), b(2) and c(9-12). The alpha and beta chains form an alternating ring which encloses part of the gamma chain. CF(1) is attached to CF(0) by a central stalk formed by the gamma and epsilon chains, while a peripheral stalk is formed by the delta and b chains.

It localises to the cell membrane. The catalysed reaction is ATP + H2O + 4 H(+)(in) = ADP + phosphate + 5 H(+)(out). Functionally, produces ATP from ADP in the presence of a proton gradient across the membrane. The catalytic sites are hosted primarily by the beta subunits. In Bacillus caldotenax, this protein is ATP synthase subunit beta.